A 490-amino-acid chain; its full sequence is Cobyric acid synthase (490 aa).

The 188-residue stretch at 252 to 439 (RLKVVVPVLP…LHGLFESTAA (188 aa)) folds into the GATase cobBQ-type domain. Cys333 (nucleophile) is an active-site residue. The active site involves His431.

It belongs to the CobB/CobQ family. CobQ subfamily.

It functions in the pathway cofactor biosynthesis; adenosylcobalamin biosynthesis. Its function is as follows. Catalyzes amidations at positions B, D, E, and G on adenosylcobyrinic A,C-diamide. NH(2) groups are provided by glutamine, and one molecule of ATP is hydrogenolyzed for each amidation. This is Cobyric acid synthase from Pseudomonas aeruginosa (strain UCBPP-PA14).